A 219-amino-acid polypeptide reads, in one-letter code: Ropporin-1-like protein (219 aa).

One can recognise an RIIa domain in the interval 17–54 (PELPDILKQFTKAAIRTQPHDLLQWSAAYFDSLSKGEP).

The protein belongs to the ropporin family. In terms of assembly, component of axonemal radial spoke complexes.

Its subcellular location is the cell projection. The protein resides in the cilium. It localises to the flagellum. Its function is as follows. Functions as part of axonemal radial spoke complexes that play an important part in the motility of sperm and cilia. Important for male fertility. Involved in fibrous sheath integrity and sperm motility, plays a role in PKA-dependent signaling processes required for spermatozoa capacitation. The sequence is that of Ropporin-1-like protein (ropn1l) from Xenopus laevis (African clawed frog).